The primary structure comprises 284 residues: Bifunctional protein FolD (284 aa).

NADP(+)-binding positions include 165–167, Ser-190, and Ile-231; that span reads GAS.

It belongs to the tetrahydrofolate dehydrogenase/cyclohydrolase family. As to quaternary structure, homodimer.

The catalysed reaction is (6R)-5,10-methylene-5,6,7,8-tetrahydrofolate + NADP(+) = (6R)-5,10-methenyltetrahydrofolate + NADPH. It carries out the reaction (6R)-5,10-methenyltetrahydrofolate + H2O = (6R)-10-formyltetrahydrofolate + H(+). Its pathway is one-carbon metabolism; tetrahydrofolate interconversion. Catalyzes the oxidation of 5,10-methylenetetrahydrofolate to 5,10-methenyltetrahydrofolate and then the hydrolysis of 5,10-methenyltetrahydrofolate to 10-formyltetrahydrofolate. The sequence is that of Bifunctional protein FolD from Bordetella avium (strain 197N).